A 151-amino-acid chain; its full sequence is Chaperonin GroEL (151 aa).

41-45 (DGTTT) provides a ligand contact to ATP.

It belongs to the chaperonin (HSP60) family. In terms of assembly, forms a cylinder of 14 subunits composed of two heptameric rings stacked back-to-back. Interacts with the co-chaperonin GroES.

It localises to the cytoplasm. The enzyme catalyses ATP + H2O + a folded polypeptide = ADP + phosphate + an unfolded polypeptide.. Together with its co-chaperonin GroES, plays an essential role in assisting protein folding. The GroEL-GroES system forms a nano-cage that allows encapsulation of the non-native substrate proteins and provides a physical environment optimized to promote and accelerate protein folding. This is Chaperonin GroEL from Mycobacteroides chelonae (Mycobacterium chelonae).